The chain runs to 778 residues: Lon protease (778 aa).

One can recognise a Lon N-terminal domain in the interval 6–207; that stretch reads LPLMALRDMV…TVISTLTSNI (202 aa). 356–363 provides a ligand contact to ATP; that stretch reads GPPGVGKT. The region spanning 592–773 is the Lon proteolytic domain; that stretch reads EDQIGSTTGL…DQVLKHALVE (182 aa). Residues serine 679 and lysine 722 contribute to the active site.

The protein belongs to the peptidase S16 family. In terms of assembly, homohexamer. Organized in a ring with a central cavity.

The protein resides in the cytoplasm. The enzyme catalyses Hydrolysis of proteins in presence of ATP.. Its function is as follows. ATP-dependent serine protease that mediates the selective degradation of mutant and abnormal proteins as well as certain short-lived regulatory proteins. Required for cellular homeostasis and for survival from DNA damage and developmental changes induced by stress. Degrades polypeptides processively to yield small peptide fragments that are 5 to 10 amino acids long. Binds to DNA in a double-stranded, site-specific manner. This chain is Lon protease, found in Rickettsia felis (strain ATCC VR-1525 / URRWXCal2) (Rickettsia azadi).